Consider the following 295-residue polypeptide: Ribosomal protein L11 methyltransferase (295 aa).

Residues Thr145, Gly166, Asp188, and Asn230 each coordinate S-adenosyl-L-methionine.

Belongs to the methyltransferase superfamily. PrmA family.

The protein localises to the cytoplasm. The catalysed reaction is L-lysyl-[protein] + 3 S-adenosyl-L-methionine = N(6),N(6),N(6)-trimethyl-L-lysyl-[protein] + 3 S-adenosyl-L-homocysteine + 3 H(+). Methylates ribosomal protein L11. In Pectobacterium atrosepticum (strain SCRI 1043 / ATCC BAA-672) (Erwinia carotovora subsp. atroseptica), this protein is Ribosomal protein L11 methyltransferase.